The chain runs to 115 residues: Meiotically up-regulated gene 42 protein (115 aa).

Its function is as follows. Has a role in meiosis. The polypeptide is Meiotically up-regulated gene 42 protein (mug42) (Schizosaccharomyces pombe (strain 972 / ATCC 24843) (Fission yeast)).